The chain runs to 962 residues: Translation initiation factor IF-2 (962 aa).

Positions 99 to 365 (VKAAQTQAAP…GKKGKKLKLE (267 aa)) are disordered. A compositionally biased stretch (basic and acidic residues) spans 117–141 (DAAKARAEAAARAEARAKAEAEAAK). The span at 145-155 (AKAGNKAKPAA) shows a compositional bias: low complexity. The span at 173–216 (KPAEESKAEKAQADKMPSKKPAEPKEKAAKPKHERNGKGKDAKK) shows a compositional bias: basic and acidic residues. Low complexity predominate over residues 219–234 (KPAAPAVPQPVVSAEE). Over residues 235-269 (QAQRDEEARRAAALRAHQEALLKEKQERQARREAM) the composition is skewed to basic and acidic residues. Positions 270–283 (KQQAEQQAKAAQEA) are enriched in low complexity. The span at 338–354 (GGRDRNNARNGDDERVR) shows a compositional bias: basic and acidic residues. Residues 462–631 (PRPPVVTVMG…LLEAEVLELT (170 aa)) form the tr-type G domain. Residues 471 to 478 (GHVDHGKT) are G1. 471–478 (GHVDHGKT) is a GTP binding site. The tract at residues 496–500 (GITQH) is G2. The tract at residues 517 to 520 (DTPG) is G3. GTP is bound by residues 517-521 (DTPGH) and 571-574 (NKID). The G4 stretch occupies residues 571–574 (NKID). A G5 region spans residues 607 to 609 (SAK).

Belongs to the TRAFAC class translation factor GTPase superfamily. Classic translation factor GTPase family. IF-2 subfamily.

The protein resides in the cytoplasm. Its function is as follows. One of the essential components for the initiation of protein synthesis. Protects formylmethionyl-tRNA from spontaneous hydrolysis and promotes its binding to the 30S ribosomal subunits. Also involved in the hydrolysis of GTP during the formation of the 70S ribosomal complex. The polypeptide is Translation initiation factor IF-2 (Neisseria meningitidis serogroup C (strain 053442)).